The sequence spans 1265 residues: Protein transport protein SEC31 (1265 aa).

WD repeat units lie at residues 6 to 46 (EIAR…ELWD), 61 to 105 (TVDN…KTKD), 116 to 156 (KHTG…EPFA), 162 to 202 (TPMD…EVLH), 209 to 252 (GGRA…APEK), 256 to 296 (GHKK…KLGE), and 299 to 339 (TTAN…PSVS). A WD 8; interaction with SEC13 repeat occupies 380-403 (SFGFGSKLVIINTDSSGKSTVKVD). Over residues 457 to 480 (KESLFEDANNDEKEATSPETKKEN) the composition is skewed to basic and acidic residues. Disordered regions lie at residues 457-485 (KESLFEDANNDEKEATSPETKKENGEDDF), 765-784 (VKSSANAKIAKPASSSGQTR), and 793-1163 (PAYA…IPEN). Positions 794-810 (AYAPPVQAPPVQAPQPP) are enriched in pro residues. Low complexity-rich tracts occupy residues 811–824 (LVQQQQQQQQQQQP), 865–875 (TPSSLSGTTSG), 901–931 (AKTAAPRRAAAAATPPVSTPTPVSAPAFGSP), 939–951 (SQPGSVGSVSSAG), and 969–987 (SISRSTSRTTVPTSSTVPA). A compositionally biased stretch (polar residues) spans 1004 to 1023 (SDASQPPSSGFASPTLNSSP). Pro residues-rich tracts occupy residues 1062–1071 (YAPPKNPYAV) and 1083–1101 (APPPPAPKLGSAAPPPPQP).

It belongs to the WD repeat SEC31 family. As to quaternary structure, the COPII coat is composed of at least 5 proteins: the SEC23/24 complex, the SEC13/31 complex, and the protein SAR1. SEC13 and SEC31 make a 2:2 tetramer that forms the edge element of the COPII outer coat. The tetramer self-assembles in multiple copies to form the complete polyhedral cage. Interacts (via WD 8) with SEC13.

It localises to the cytoplasmic vesicle. It is found in the COPII-coated vesicle membrane. Its subcellular location is the endoplasmic reticulum membrane. Component of the coat protein complex II (COPII) which promotes the formation of transport vesicles from the endoplasmic reticulum (ER). The coat has two main functions, the physical deformation of the endoplasmic reticulum membrane into vesicles and the selection of cargo molecules. In Candida albicans (strain SC5314 / ATCC MYA-2876) (Yeast), this protein is Protein transport protein SEC31 (PGA63).